A 358-amino-acid polypeptide reads, in one-letter code: Naringenin,2-oxoglutarate 3-dioxygenase (358 aa).

Residues 190–294 (CVDMDQKIVV…RLSIATFQNP (105 aa)) form the Fe2OG dioxygenase domain. Residues histidine 217, aspartate 219, and histidine 275 each contribute to the Fe cation site. Arginine 285 provides a ligand contact to 2-oxoglutarate.

Belongs to the iron/ascorbate-dependent oxidoreductase family. Interacts with Dihydroflavonol-4-reductase (TT3), chalcone synthase (TT4) and chalcone isomerase (TT5) to form a flavonoid enzyme complex. Fe(2+) is required as a cofactor. It depends on L-ascorbate as a cofactor.

The catalysed reaction is a (2S)-flavan-4-one + 2-oxoglutarate + O2 = a (2R,3R)-dihydroflavonol + succinate + CO2. The protein operates within secondary metabolite biosynthesis; flavonoid biosynthesis. Functionally, catalyzes the 3-beta-hydroxylation of 2S-flavanones to 2R,3R-dihydroflavonols which are intermediates in the biosynthesis of flavonols, anthocyanidins, catechins and proanthocyanidins in plants. This is Naringenin,2-oxoglutarate 3-dioxygenase (F3H) from Arabidopsis thaliana (Mouse-ear cress).